The primary structure comprises 239 residues: Yolk ferritin (239 aa).

A signal peptide spans 1-18; the sequence is MNSVLFLTLAVCSSLAYG. Residues 27 to 217 enclose the Ferritin-like diiron domain; it reads QNYKENINQL…HAITRLRSFE (191 aa). The Fe cation site is built by glutamate 44 and glutamate 79. The segment at 105–146 is insertion; not present in other ferritins; sequence KDACETVMKFVTSDTSGLEEFRDRRMCICGFVATKTINDNCG. The Fe cation site is built by glutamate 165 and glutamine 199.

It belongs to the ferritin family. As to quaternary structure, oligomer of 12 or 24 subunits. The functional molecule is roughly spherical and contains a central cavity into which the polymeric ferric iron core is deposited. As to expression, midgut gland and bloodstream.

The protein localises to the secreted. The enzyme catalyses 4 Fe(2+) + O2 + 4 H(+) = 4 Fe(3+) + 2 H2O. Functionally, stores iron in a soluble, non-toxic, readily available form. Important for iron homeostasis. Has ferroxidase activity. Iron is taken up in the ferrous form and deposited as ferric hydroxides after oxidation. This is Yolk ferritin from Lymnaea stagnalis (Great pond snail).